The following is a 602-amino-acid chain: ATP-dependent RNA helicase DeaD (602 aa).

The short motif at 6–34 is the Q motif element; the sequence is MTFSSFGLNSCIITALNDIGYVQPSPIQA. In terms of domain architecture, Helicase ATP-binding spans 37–208; it reads IPYLIKGKDV…RRFMKNPKEI (172 aa). 50–57 lines the ATP pocket; that stretch reads AQTGSGKT. The DEAD box motif lies at 156–159; that stretch reads DEAD. Residues 231–378 enclose the Helicase C-terminal domain; sequence KTDALIRFLE…EVNLPKSDFL (148 aa).

Belongs to the DEAD box helicase family. DeaD/CsdA subfamily.

Its subcellular location is the cytoplasm. It carries out the reaction ATP + H2O = ADP + phosphate + H(+). Functionally, DEAD-box RNA helicase involved in various cellular processes at low temperature, including ribosome biogenesis, mRNA degradation and translation initiation. The protein is ATP-dependent RNA helicase DeaD of Buchnera aphidicola subsp. Baizongia pistaciae (strain Bp).